We begin with the raw amino-acid sequence, 397 residues long: 1-deoxy-D-xylulose 5-phosphate reductoisomerase (397 aa).

The NADPH site is built by Ser-10, Gly-11, Ser-12, Ile-13, Ala-36, Arg-37, and Asn-124. Position 125 (Lys-125) interacts with 1-deoxy-D-xylulose 5-phosphate. NADPH is bound at residue Glu-126. Asp-150 provides a ligand contact to Mn(2+). Residues Ser-151, Glu-152, Ser-186, and His-209 each contribute to the 1-deoxy-D-xylulose 5-phosphate site. Residue Glu-152 coordinates Mn(2+). Gly-215 is an NADPH binding site. Positions 222, 227, 228, and 231 each coordinate 1-deoxy-D-xylulose 5-phosphate. Residue Glu-231 participates in Mn(2+) binding.

It belongs to the DXR family. Requires Mg(2+) as cofactor. The cofactor is Mn(2+).

It carries out the reaction 2-C-methyl-D-erythritol 4-phosphate + NADP(+) = 1-deoxy-D-xylulose 5-phosphate + NADPH + H(+). The protein operates within isoprenoid biosynthesis; isopentenyl diphosphate biosynthesis via DXP pathway; isopentenyl diphosphate from 1-deoxy-D-xylulose 5-phosphate: step 1/6. In terms of biological role, catalyzes the NADPH-dependent rearrangement and reduction of 1-deoxy-D-xylulose-5-phosphate (DXP) to 2-C-methyl-D-erythritol 4-phosphate (MEP). This chain is 1-deoxy-D-xylulose 5-phosphate reductoisomerase, found in Aeromonas hydrophila subsp. hydrophila (strain ATCC 7966 / DSM 30187 / BCRC 13018 / CCUG 14551 / JCM 1027 / KCTC 2358 / NCIMB 9240 / NCTC 8049).